The following is a 509-amino-acid chain: Dihydrolipoyl dehydrogenase, mitochondrial (509 aa).

Residues 1–35 constitute a mitochondrion transit peptide; it reads MQSWSRVYCSLAKRGHFNRISHGLQGVSSVPLRTY. N6-acetyllysine; alternate is present on K66. Residue K66 is modified to N6-succinyllysine; alternate. FAD is bound by residues 71 to 80 and K89; that span reads EKNDTLGGTC. A disulfide bridge connects residues C80 and C85. K122, K132, and K143 each carry N6-acetyllysine; alternate. N6-succinyllysine; alternate is present on residues K122, K132, and K143. FAD is bound at residue G154. K159 and K166 each carry N6-succinyllysine. 183–185 contacts FAD; sequence TGS. NAD(+) contacts are provided by residues 220 to 227 and E243; that span reads GAGVIGVE. K273 and K277 each carry N6-succinyllysine. V278 contributes to the NAD(+) binding site. 2 positions are modified to phosphoserine: S285 and S297. G314 is a binding site for NAD(+). K346 carries the N6-acetyllysine modification. FAD-binding positions include D355 and 361-364; that span reads MLAH. K410 is subject to N6-acetyllysine; alternate. An N6-succinyllysine; alternate modification is found at K410. N6-acetyllysine is present on residues K417 and K420. K430 carries the N6-succinyllysine modification. H487 serves as the catalytic Proton acceptor. Position 502 is a phosphoserine (S502). K505 is modified (N6-acetyllysine; alternate). Position 505 is an N6-succinyllysine; alternate (K505).

It belongs to the class-I pyridine nucleotide-disulfide oxidoreductase family. In terms of assembly, homodimer. Part of the multimeric pyruvate dehydrogenase complex that contains multiple copies of pyruvate dehydrogenase (subunits PDHA (PDHA1 or PDHA2) and PDHB, E1), dihydrolipoamide acetyltransferase (DLAT, E2) and lipoamide dehydrogenase (DLD, E3). These subunits are bound to an inner core composed of about 48 DLAT and 12 PDHX molecules (by non covalent bonds). The 2-oxoglutarate dehydrogenase complex is composed of OGDH (2-oxoglutarate dehydrogenase; E1), DLST (dihydrolipoamide succinyltransferase; E2), DLD (dihydrolipoamide dehydrogenase; E3) and the assembly factor KGD4. It contains multiple copies of the three enzymatic components (E1, E2 and E3). In the nucleus, the 2-oxoglutarate dehydrogenase complex associates with KAT2A. Interacts with PDHX. It depends on FAD as a cofactor. Tyrosine phosphorylated.

The protein resides in the mitochondrion matrix. It localises to the nucleus. Its subcellular location is the cell projection. The protein localises to the cilium. It is found in the flagellum. The protein resides in the cytoplasmic vesicle. It localises to the secretory vesicle. Its subcellular location is the acrosome. The catalysed reaction is N(6)-[(R)-dihydrolipoyl]-L-lysyl-[protein] + NAD(+) = N(6)-[(R)-lipoyl]-L-lysyl-[protein] + NADH + H(+). Functionally, lipoamide dehydrogenase is a component of the glycine cleavage system as well as an E3 component of three alpha-ketoacid dehydrogenase complexes (pyruvate-, alpha-ketoglutarate-, and branched-chain amino acid-dehydrogenase complex). The 2-oxoglutarate dehydrogenase complex is mainly active in the mitochondrion. A fraction of the 2-oxoglutarate dehydrogenase complex also localizes in the nucleus and is required for lysine succinylation of histones: associates with KAT2A on chromatin and provides succinyl-CoA to histone succinyltransferase KAT2A. In monomeric form may have additional moonlighting function as serine protease. Involved in the hyperactivation of spermatazoa during capacitation and in the spermatazoal acrosome reaction. In Cricetulus griseus (Chinese hamster), this protein is Dihydrolipoyl dehydrogenase, mitochondrial (DLD).